Reading from the N-terminus, the 522-residue chain is Lysine--tRNA ligase (522 aa).

Positions 44 to 52 (PSGLPHIGT) match the 'HIGH' region motif. Positions 290-294 (KISKS) match the 'KMSKS' region motif. Residue K293 coordinates ATP.

Belongs to the class-I aminoacyl-tRNA synthetase family.

The protein resides in the cytoplasm. It catalyses the reaction tRNA(Lys) + L-lysine + ATP = L-lysyl-tRNA(Lys) + AMP + diphosphate. The chain is Lysine--tRNA ligase from Rickettsia bellii (strain OSU 85-389).